Reading from the N-terminus, the 232-residue chain is 7-cyano-7-deazaguanine synthase (232 aa).

ATP is bound at residue 8 to 18 (FSGGQDSTTCL). Zn(2+)-binding residues include Cys-187, Cys-196, Cys-199, and Cys-202.

The protein belongs to the QueC family. The cofactor is Zn(2+).

The catalysed reaction is 7-carboxy-7-deazaguanine + NH4(+) + ATP = 7-cyano-7-deazaguanine + ADP + phosphate + H2O + H(+). It functions in the pathway purine metabolism; 7-cyano-7-deazaguanine biosynthesis. In terms of biological role, catalyzes the ATP-dependent conversion of 7-carboxy-7-deazaguanine (CDG) to 7-cyano-7-deazaguanine (preQ(0)). The polypeptide is 7-cyano-7-deazaguanine synthase (Vibrio campbellii (strain ATCC BAA-1116)).